Consider the following 2655-residue polypeptide: MIESQREFNCIGGDNQNGVAVIGVGFKIPLDLENCLSSPSELYSALFNEFDSVTKNTSSRWSDNYFKNGDIVSLSAGLLPLREIKSFDPTFFGINPSDADLIDPQQRLLLKCVWNALEDGGIDPISIRSSDTSVYIGCSTIDYFLLNRNPVDPHNHGIQTASYSIPNRISYCFDFRGESLFVDTACSSSLNAVHLGYNSIINLKSKLSIVGGSNLILDPQNSIFFSKQQVNGPSGKCNSFSEEADGFVRSETVGVVVLKNLKDAIKDGDRIYCVIQGSNSNVDGNYEKLNYISPSKLSQAENITKALKSTNGAVNASDIDYFECHGTGTPTGDPIELEGISIALNRTQQSTTLSNPLLIGSIKSNIGHGEASSGIASLIKCCVMFKYRQFLPNINFKTPNPLIKFKEWNLKVVTEPVPFNNNKQTIMAINNFGVSGSNCCIILSEYKSNNNNNNDFKATTHLKSKKFIIPFSSNSSTSLDNYKSLLSNETNNFQDFVIKQINNKSTSLIQRSVIIASNWSEFNESSNEIQSNIKKSIISNITIKKKNAVTVFVFCGQGSQYNKMALSLYENEHIFKSTMDKLDKELSKHYGYSILEKLRSITDEDLVTIHQPILAIPVNVMVQVSLYELYKHWGIKSDIMVGHSFGEIACSYCSGMVDFKTLCYLTYHRSVAQNKTIGSGKMLSINIGAKEYLDSYSTKYPSVEIACYNSETSIVIAGNEELLNEISKDLKSKDIFTAMLPSLSAFHTTHQSVIKDDICSLNFKSTLSKITVFSTVTSNQFGINNNNNNNNNQLNSNYLFQNVIQPVKFSETISNIYKYIESNDMGNEITFIEIAPHPTLQYYLNQMKSQQSEYFNNGEKISIYSACNKKKNDYNEFLKTISTLFVNGYNNINFKSQIINNNNNDNNNNFNLPLYQWDDNEYYKIHPTWKKANKNGPSINHLGNLNDSSIKSFKTYINTRKPQFQWLKGHSLKGKVVFPGMGYISNLLSVYNMNQDITINEIQFKSAFILVDGVNNCLETSIVPLTKNEFNIKFHFKDLKTNKWVLCANANYSLFKHNDNNDKLDIEKLKSNCNYTIISKDELYNNIRAKSGLIYKGLFQGVKEAFIGNRCSLTVLSLNEIENQQEFKHLLENRNFNSLFNTAILDSCLHGSLHSKEQSQIYFDKCEGFKYYSNNINLATSKRNEYKEINVYIETNPVINSTVIVSLKIMLPDGTLLIEIQKVVCKSSIPIIDSTSVIQPSPKDLHTPYYQPKNSLIKPPQSFKHLHCMKEFASIESDNREMVYMSIYHLIFKAINARSPTKINLESLENLTLDQFKELIKDSAANIQRSNQFIYECLKLYHTNHSNYKKNQIKDFIKECEDFNGYNQIIFKTIKIYAKSLFPLPDDDPFTDTIQSLFEDDQLENVYIHLKHLYPVNNLLSEIVFQSIKPIINQTSTFRILEIGAGYGTISQLIFDKLEQLLADNFTSSRIDIEYTFTDISNTFLPRAKERYSKYKRFNIIYKLLDLELPLTEGIQDFRPLYYDIVVMSNVLHVVKDINFSTNEIYKVLKQNGQLIFVEPTYKNLYLDTIFGIFPQWWSFNDDIRTDRCCLEPSKWFEFLETINFKDTIILGQDNKEILKNVENSIILVQTRKPSQLELSINNSPSTNQFKSFENIILYTDDNQQPNDCSEIIDLLKSLELPIKIINNIDQFNQIIKTQYNNNNNNNNNNNNNNNNNNNNTNNNLIIFLKSVNQLNTNNYKDITFEYVQINQILVKLELEENYKLLLITNNSQSSNYLSNSLIGTSRYLFADIVSSKLDIITIDFDTVSIKNHQNVISVINHLLDSKDNSEREYYIINNEINIERYKNESNIKHQLKSKTFQENKDELMVQLDSNLEYRLKSKSKQELKSTHVEIQVKAIGINYKDYATYSGLIDSIIEIDKDKEKDENYDQNYPSIGNDFSGVITRIGSDVRKFKVGDEVCGLAPKTSASHIITEEGYLCKKPSNISHSEAASSVTVYTTSFQSIYSIGDLKKNETILIHSGSGGIGLSALEILKWKNHQGYIFATVGSEDKVKYLTDTYGSFITGIYSSRDKDYQDQIKEKLKSLGCDIDHQGVDLILNTLSVEYMDSNFKCLNQKGRCIDLSITHLTPFDYMDYNKFKFNVSYGNIELVVLPSKIIKDHLKKMLKAFSLGSLRFIPIVEFSNLNIRNAVEYINQRKHIGKIVVKNDVDFINKLFIEQQQQQNSVENNEILMKDKYDISNLELGKNILLTGQTGIILTILKWLYKHSNNSIENIIIISKSKLKWELELFINESTNNRIKIHYKQADVGNNNELNQCFEELRLRHSIEDINSIFHFAFINDIGQFEDVNMNRMDIAHHAKAIGSLNLHNQSIERKWNIKQFVLASSALSVFGGDNQCCYISACSVLDSLSKYRKSIGLPSLSINFGGVTSTGFVSRSGAVEANLESSIINLITPQSLISSLDLFIQNSQTFSNYTHFNFIYDNIESYSLNRMLFKFDYLINQHSSLVSNKRLGGINENNNIGDLLVSKIGELLSIEPSKLNLDFRLVDYGLDSLVIVQLKNFIDKQFQPHLISILQLQNNKISTTIEIIIKGYNNNQNKKIKNEQSNDIPSVVQKETIKDNNENKDDIKIDMDDKKENLKGKKENIDDKKENNN.

Positions 16–445 (QNGVAVIGVG…GSNCCIILSE (430 aa)) constitute a Ketosynthase family 3 (KS3) domain. Catalysis depends on for beta-ketoacyl synthase activity residues Cys-186, His-325, and His-368. Positions 634–667 (GIKSDIMVGHSFGEIACSYCSGMVDFKTLCYLTY) are acyl/malonyl transferase. Ser-644 (for acyl/malonyl transferase activity) is an active-site residue. Residues 926–1059 (HPTWKKANKN…ANYSLFKHND (134 aa)) form an N-terminal hotdog fold region. A PKS/mFAS DH domain is found at 926–1234 (HPTWKKANKN…CKSSIPIIDS (309 aa)). His-970 serves as the catalytic Proton acceptor; for dehydratase activity. A C-terminal hotdog fold region spans residues 1074 to 1234 (NYTIISKDEL…CKSSIPIIDS (161 aa)). The Proton donor; for dehydratase activity role is filled by Asp-1146. The segment at 1700 to 1719 (YNNNNNNNNNNNNNNNNNNN) is disordered. A Carrier domain is found at 2517–2594 (NENNNIGDLL…TTIEIIIKGY (78 aa)). Position 2554 is an O-(pantetheine 4'-phosphoryl)serine (Ser-2554). Residues 2612–2655 (SVVQKETIKDNNENKDDIKIDMDDKKENLKGKKENIDDKKENNN) are disordered. Basic and acidic residues predominate over residues 2617-2655 (ETIKDNNENKDDIKIDMDDKKENLKGKKENIDDKKENNN). Residues 2618–2655 (TIKDNNENKDDIKIDMDDKKENLKGKKENIDDKKENNN) adopt a coiled-coil conformation.

It depends on pantetheine 4'-phosphate as a cofactor.

In terms of biological role, probable polyketide synthase. This Dictyostelium discoideum (Social amoeba) protein is Probable polyketide synthase 42 (pks42).